The primary structure comprises 291 residues: Shikimate dehydrogenase (NADP(+)) (291 aa).

Shikimate contacts are provided by residues 14 to 16 (SKS) and Thr-61. Lys-65 functions as the Proton acceptor in the catalytic mechanism. NADP(+) is bound at residue Glu-77. 2 residues coordinate shikimate: Asn-86 and Asp-102. Residues 139-143 (GAGGA), 164-169 (NRTFSR), and Leu-232 each bind NADP(+). A shikimate-binding site is contributed by Tyr-234. An NADP(+)-binding site is contributed by Gly-256.

The protein belongs to the shikimate dehydrogenase family. Homodimer.

The catalysed reaction is shikimate + NADP(+) = 3-dehydroshikimate + NADPH + H(+). The protein operates within metabolic intermediate biosynthesis; chorismate biosynthesis; chorismate from D-erythrose 4-phosphate and phosphoenolpyruvate: step 4/7. Functionally, involved in the biosynthesis of the chorismate, which leads to the biosynthesis of aromatic amino acids. Catalyzes the reversible NADPH linked reduction of 3-dehydroshikimate (DHSA) to yield shikimate (SA). The chain is Shikimate dehydrogenase (NADP(+)) from Blochmanniella pennsylvanica (strain BPEN).